A 369-amino-acid polypeptide reads, in one-letter code: N-succinyl-L-Arg/Lys racemase (369 aa).

Residues tyrosine 26, aspartate 51, 161–163, and 191–193 each bind substrate; these read KMK and DVN. Aspartate 191, glutamate 218, and aspartate 243 together coordinate Mg(2+). Substrate contacts are provided by residues lysine 267, 295–296, and 320–322; these read SM and ELT.

The protein belongs to the mandelate racemase/muconate lactonizing enzyme family. Requires Mg(2+) as cofactor.

In terms of biological role, catalyzes efficient racemization of N-succinyl-L-Arg and N-succinyl-L-Lys, suggesting that these are physiological substrates of this enzyme. Has low activity with L-Asp-L-Lys, and even lower activity with L-Leu-L-Arg, L-Leu-L-Lys, N-succinyl-L-His and N-succinyl-L-Met (in vitro). The sequence is that of N-succinyl-L-Arg/Lys racemase from Bacillus cereus (strain ATCC 14579 / DSM 31 / CCUG 7414 / JCM 2152 / NBRC 15305 / NCIMB 9373 / NCTC 2599 / NRRL B-3711).